The sequence spans 389 residues: Acetyl-CoA:oxalate CoA-transferase (389 aa).

The active site involves H237.

Homodimer.

It catalyses the reaction oxalate + acetyl-CoA = oxalyl-CoA + acetate. Functionally, involved in the catabolism of oxalate and in the adapatation to low pH. ACOCT serves to prime the oxalate-induced acid tolerance response (ATR) cycle by producing substrate for oxalyl-CoA decarboxylase (OXC) and formyl-coenzyme A transferase (FCOCT). Catalyzes the reversible conversion of acetyl-CoA and oxalate to oxalyl-CoA and acetate. It can also use formyl-CoA and oxalate to produce oxalyl-CoA and formate with significantly reduced specific activity. This Acetobacter aceti protein is Acetyl-CoA:oxalate CoA-transferase (uctC).